The chain runs to 467 residues: UTP--glucose-1-phosphate uridylyltransferase (467 aa).

UTP is bound by residues 83 to 86 (LNGG), lysine 97, glutamine 160, and glycine 189. 85–86 (GG) is a substrate binding site. Substrate contacts are provided by residues histidine 190 and 218–220 (NSD). UTP-binding residues include aspartate 220 and lysine 358.

It belongs to the UDPGP type 1 family.

It is found in the cytoplasm. It carries out the reaction alpha-D-glucose 1-phosphate + UTP + H(+) = UDP-alpha-D-glucose + diphosphate. Functionally, plays a central role as a glucosyl donor in cellular metabolic pathways. The protein is UTP--glucose-1-phosphate uridylyltransferase (UGPA) of Musa acuminata (Banana).